Consider the following 64-residue polypeptide: Cecropin-A (64 aa).

The signal sequence occupies residues 1-22 (MNFSRIFFFVFACLTALAMVNA). The propeptide at 23 to 26 (APEP) is removed by a dipeptidylpeptidase. Lysine 63 is modified (lysine amide).

This sequence belongs to the cecropin family. In terms of processing, a protein with the same sequence as cecropin A, but lacking the carboxyl blocking group, has been isolated and called cecropin C.

The protein localises to the secreted. Its function is as follows. Cecropins have lytic and antibacterial activity against several Gram-positive and Gram-negative bacteria. The protein is Cecropin-A of Hyalophora cecropia (Cecropia moth).